We begin with the raw amino-acid sequence, 185 residues long: Peptidyl-tRNA hydrolase (185 aa).

Tyr-14 lines the tRNA pocket. The active-site Proton acceptor is His-19. TRNA is bound by residues Tyr-65, Asn-67, and Asn-113.

Belongs to the PTH family. Monomer.

The protein resides in the cytoplasm. It carries out the reaction an N-acyl-L-alpha-aminoacyl-tRNA + H2O = an N-acyl-L-amino acid + a tRNA + H(+). Functionally, hydrolyzes ribosome-free peptidyl-tRNAs (with 1 or more amino acids incorporated), which drop off the ribosome during protein synthesis, or as a result of ribosome stalling. Its function is as follows. Catalyzes the release of premature peptidyl moieties from peptidyl-tRNA molecules trapped in stalled 50S ribosomal subunits, and thus maintains levels of free tRNAs and 50S ribosomes. The polypeptide is Peptidyl-tRNA hydrolase (Rickettsia felis (strain ATCC VR-1525 / URRWXCal2) (Rickettsia azadi)).